A 468-amino-acid polypeptide reads, in one-letter code: MADDAGLETSLCSEQFGSGEARGCRVAADGSLQWEVGGWRWWGLSRAFTVKPEGRDSGEVGAPGAPSPPLSGLQAVFLPQGFPDSVSPDYLPYQLWDSVQAFASGLSGSLATQAVLLGIGVGNAKATVSAATATWLVKDSTGMLGRIVFAWWKGSKLDCNAKQWRLFADILNDVAMFLEIMAPVYPICFTMTVSTSNLAKCIVSVAGGATRAALTVHQARRNNMADVSAKDSSQETLVNLVGLLVSLLMLPLVSGCPGFSLGCFFFLTALHIYANYRAVRALVMETLNEGRLRLVLKHYLQRGEVLNPTAANRMEPLWTGFWPAPSLSLGVPLHRLVSSVFELQQLVEGHQEPYLLCWDQSRNQVQVVLNQKAGPKTILRAATHGLMLGALQGDGPLPAELEELRNRVQAGPKKESWVIVKETHEVLDMLFPKFLKGLQDAGWKTEKHQLEVDEWRATWLLSPEKKVL.

Ala2 is modified (N-acetylalanine). Thr49 is modified (phosphothreonine). The helical transmembrane segment at 247 to 267 (LLMLPLVSGCPGFSLGCFFFL) threads the bilayer.

This sequence belongs to the RUS1 family.

The protein localises to the membrane. The protein is RUS family member 1 (Rusf1) of Pongo abelii (Sumatran orangutan).